A 124-amino-acid polypeptide reads, in one-letter code: Small ribosomal subunit protein bS6 (124 aa).

The segment at Glu96–Ala124 is disordered. The span at Ala114–Ala124 shows a compositional bias: low complexity.

The protein belongs to the bacterial ribosomal protein bS6 family.

Functionally, binds together with bS18 to 16S ribosomal RNA. This is Small ribosomal subunit protein bS6 from Burkholderia orbicola (strain AU 1054).